The chain runs to 166 residues: Lactose-binding lectin l-2 (166 aa).

The N-terminal stretch at 1–24 (MVSFKLPAFLCVAVLSSMALVSHG) is a signal peptide. 3 disulfide bridges follow: Cys34-Cys45, Cys62-Cys160, and Cys136-Cys152. One can recognise a C-type lectin domain in the interval 41–161 (HKNRCYLHVA…CDLLFPSICV (121 aa)).

As to quaternary structure, homodimer; disulfide-linked. As to expression, skin; contained within club cells which are a component of the epidermis in combination with epithelial cells and mucus cells (at protein level).

The protein localises to the secreted. Its function is as follows. Involved in host defense at the body surface. Causes agglutination and suppresses the growth of the Gram-negative bacterium E.coli K12. Possesses calcium-independent hemagglutinating activity. The protein is Lactose-binding lectin l-2 of Anguilla japonica (Japanese eel).